Reading from the N-terminus, the 327-residue chain is Phenylalanine--tRNA ligase alpha subunit (327 aa).

Glu-252 serves as a coordination point for Mg(2+).

This sequence belongs to the class-II aminoacyl-tRNA synthetase family. Phe-tRNA synthetase alpha subunit type 1 subfamily. Tetramer of two alpha and two beta subunits. Requires Mg(2+) as cofactor.

It localises to the cytoplasm. The enzyme catalyses tRNA(Phe) + L-phenylalanine + ATP = L-phenylalanyl-tRNA(Phe) + AMP + diphosphate + H(+). This chain is Phenylalanine--tRNA ligase alpha subunit, found in Shewanella baltica (strain OS223).